The chain runs to 421 residues: MPFSVSWGILLLAGLCCLVPSSLVEDPQEDAAQKTDTSHHDQGDWEDLACQKISYNVTDLAFDLYKELADLSQTSNVLVTPTSVAMAFAMLSLGTKADTRTEILEGLNVNLTETPEAKIHECFQQVLQALSRPDTRLQLTTGSSLFVNKSMKLVDTFLEDTKKLYHSEASSINFRDTEEAKEQINNYVEKRTGRKVVDLVKHLKKDTSLALVDYISFHGKWKDKFKAEHIMVEGFHVDDKTIIRVPMINHLGRFDIHRDRELSSWVLAQHYVGNATAFFILPDPKKMWQLEEKLTYSHLENIQRAFDIRSINLHFPKLSISGTYKLKRVLRNLGITKIFSNEADLSGVSQEAPLKLSKAVHVAVLTIDEKGTEATGAPHLEEKAWSKYQTVMFNRPFLVIIKDDITNFPLFIGKVVNPTQK.

The first 21 residues, 1–21 (MPFSVSWGILLLAGLCCLVPS), serve as a signal peptide directing secretion. Asn56, Asn110, Asn148, and Asn274 each carry an N-linked (GlcNAc...) asparagine glycan.

This sequence belongs to the serpin family. In terms of assembly, interacts with CANX and PDIA3. Glycosylated. As to expression, expressed in the liver, leukocytes and testis. Also detected in brain, colon, uterus, esophagus, spleen, trachea, kidney and lung.

The protein localises to the endoplasmic reticulum. Functionally, putative serine protease inhibitor. The polypeptide is Alpha-1-antitrypsin-related protein (SERPINA2) (Homo sapiens (Human)).